A 162-amino-acid polypeptide reads, in one-letter code: Photosystem II extrinsic protein V (162 aa).

Residues 1–25 (MLKRCLWLVVTVLFAWQVFNGTAIA) form the signal peptide. Cysteine 62, cysteine 65, histidine 66, and histidine 117 together coordinate heme c.

It belongs to the cytochrome c family. PsbV subfamily. In terms of assembly, PSII is composed of 1 copy each of membrane proteins PsbA, PsbB, PsbC, PsbD, PsbE, PsbF, PsbH, PsbI, PsbJ, PsbK, PsbL, PsbM, PsbT, PsbX, PsbY, PsbZ, Psb30/Ycf12, peripheral proteins PsbO, CyanoQ (PsbQ), PsbU, PsbV and a large number of cofactors. It forms dimeric complexes. Heme c serves as cofactor.

It localises to the cellular thylakoid membrane. One of the extrinsic, lumenal subunits of photosystem II (PSII). PSII is a light-driven water plastoquinone oxidoreductase, using light energy to abstract electrons from H(2)O, generating a proton gradient subsequently used for ATP formation. The extrinsic proteins stabilize the structure of photosystem II oxygen-evolving complex (OEC), the ion environment of oxygen evolution and protect the OEC against heat-induced inactivation. Low-potential cytochrome c that plays a role in the OEC of PSII. The sequence is that of Photosystem II extrinsic protein V from Cyanothece sp. (strain PCC 7425 / ATCC 29141).